Reading from the N-terminus, the 656-residue chain is MSSNSYQVSIPMSKRNTNGLPGSSSNELKTSAGGAVLSFHDICYRVKVKSGFLFCRKTVEKEILTNINGIMKPGLNAILGPTGGGKSSLLDVLAARKDPHGLSGDVLINGAPRPANFKCNSGYVVQDDVVMGTLTVRENLQFSAALRLPTTMTNHEKNERINMVIQELGLDKVADSKVGTQFIRGVSGGERKRTSIAMELITDPSILFLDEPTTGLDSSTANAVLLLLKRMSKQGRTIIFSIHQPRYSIFKLFDSLTLLASGRLMFHGPAREALGYFASIGYNCEPYNNPADFFLDVINGDSSAVVLSRADRDEGAQEPEEPPEKDTPLIDKLAAFYTNSSFFKDTKVELDQFSGGRKKKKSSVYKEVTYTTSFCHQLRWISRRSFKNLLGNPQASVAQIIVTIILGLVIGAIFYDLKNDPSGIQNRAGVLFFLTTNQCFSSVSAVELLVVEKKLFIHEYISGYYRVSSYFFGKLLSDLLPMRMLPSIIFTCITYFLLGLKPAVGSFFIMMFTLMMVAYSASSMALAIAAGQSVVSVATLLMTISFVFMMIFSGLLVNLKTVVPWLSWLQYFSIPRYGFSALQYNEFLGQNFCPGLNVTTNNTCSFAICTGAEYLENQGISLSAWGLWQNHVALACMMVIFLTIAYLKLLLLKKYS.

Residues 1–25 (MSSNSYQVSIPMSKRNTNGLPGSSS) are disordered. Over 1 to 394 (MSSNSYQVSI…SFKNLLGNPQ (394 aa)) the chain is Cytoplasmic. One can recognise an ABC transporter domain in the interval 37–286 (LSFHDICYRV…FASIGYNCEP (250 aa)). ATP contacts are provided by residues 80 to 87 (GPTGGGKS), 184 to 190 (RGVSGGE), Glu211, and His243. The ABC transmembrane type-2 domain occupies 390-652 (LGNPQASVAQ…TIAYLKLLLL (263 aa)). Residues 395 to 415 (ASVAQIIVTIILGLVIGAIFY) traverse the membrane as a helical segment. Residues 416–429 (DLKNDPSGIQNRAG) lie on the Extracellular side of the membrane. Residues 430-450 (VLFFLTTNQCFSSVSAVELLV) traverse the membrane as a helical segment. At 451–478 (VEKKLFIHEYISGYYRVSSYFFGKLLSD) the chain is on the cytoplasmic side. The chain crosses the membrane as a helical span at residues 479–498 (LLPMRMLPSIIFTCITYFLL). Over 499-507 (GLKPAVGSF) the chain is Extracellular. The helical transmembrane segment at 508 to 530 (FIMMFTLMMVAYSASSMALAIAA) threads the bilayer. Residues 531 to 536 (GQSVVS) lie on the Cytoplasmic side of the membrane. A helical transmembrane segment spans residues 537-557 (VATLLMTISFVFMMIFSGLLV). Residues 558 to 631 (NLKTVVPWLS…LSAWGLWQNH (74 aa)) are Extracellular-facing. Cysteines 593 and 609 form a disulfide. Asn597 and Asn601 each carry an N-linked (GlcNAc...) asparagine glycan. Residues 632–652 (VALACMMVIFLTIAYLKLLLL) traverse the membrane as a helical segment. Residues 653–656 (KKYS) are Cytoplasmic-facing.

It belongs to the ABC transporter superfamily. ABCG family. Eye pigment precursor importer (TC 3.A.1.204) subfamily. In terms of assembly, homodimer; disulfide-linked. The minimal functional unit is a homodimer, but the major oligomeric form in plasma membrane is a homotetramer with possibility of higher order oligomerization up to homododecamers. In terms of processing, N-glycosylated. Glycosylation-deficient ABCG2 is normally expressed and functional. Phosphorylated. Phosphorylation may regulate the localization to the plasma membrane, the homooligomerization and therefore, the activity of the transporter. High expression in brain, kidney and lung. Also expressed in livere, colon, small intestine, heart, skeletal muscle, spleen, stomach and pancreas.

The protein localises to the cell membrane. The protein resides in the apical cell membrane. It localises to the mitochondrion membrane. The enzyme catalyses ATP + H2O + xenobioticSide 1 = ADP + phosphate + xenobioticSide 2.. It catalyses the reaction urate(in) + ATP + H2O = urate(out) + ADP + phosphate + H(+). It carries out the reaction indoxyl sulfate(in) + ATP + H2O = indoxyl sulfate(out) + ADP + phosphate + H(+). The catalysed reaction is sphing-4-enine 1-phosphate(in) + ATP + H2O = sphing-4-enine 1-phosphate(out) + ADP + phosphate + H(+). The enzyme catalyses estrone 3-sulfate(in) + ATP + H2O = estrone 3-sulfate(out) + ADP + phosphate + H(+). It catalyses the reaction dehydroepiandrosterone 3-sulfate(in) + ATP + H2O = dehydroepiandrosterone 3-sulfate(out) + ADP + phosphate + H(+). It carries out the reaction 4-methylumbelliferone sulfate(in) + ATP + H2O = 4-methylumbelliferone sulfate(out) + ADP + phosphate + H(+). The catalysed reaction is 5,7-dimethyl-2-methylamino-4-(3-pyridylmethyl)-1,3-benzothiazol-6-yl beta-D-glucuronate(in) + ATP + H2O = 5,7-dimethyl-2-methylamino-4-(3-pyridylmethyl)-1,3-benzothiazol-6-yl beta-D-glucuronate(out) + ADP + phosphate + H(+). The enzyme catalyses 4-methylumbelliferone beta-D-glucuronate(in) + ATP + H2O = 4-methylumbelliferone beta-D-glucuronate(out) + ADP + phosphate + H(+). It catalyses the reaction 5,7-dimethyl-2-methylamino-4-(3-pyridylmethyl)-1,3-benzothiazol-6-yl sulfate(in) + ATP + H2O = 5,7-dimethyl-2-methylamino-4-(3-pyridylmethyl)-1,3-benzothiazol-6-yl sulfate(out) + ADP + phosphate + H(+). It carries out the reaction 17beta-estradiol 17-O-(beta-D-glucuronate)(in) + ATP + H2O = 17beta-estradiol 17-O-(beta-D-glucuronate)(out) + ADP + phosphate + H(+). The catalysed reaction is methotrexate(in) + ATP + H2O = methotrexate(out) + ADP + phosphate + H(+). The enzyme catalyses riboflavin(in) + ATP + H2O = riboflavin(out) + ADP + phosphate + H(+). It catalyses the reaction pheophorbide a(in) + ATP + H2O = pheophorbide a(out) + ADP + phosphate + H(+). It carries out the reaction itaconate(in) + ATP + H2O = itaconate(out) + ADP + phosphate + H(+). Broad substrate specificity ATP-dependent transporter of the ATP-binding cassette (ABC) family that actively extrudes a wide variety of physiological compounds, dietary toxins and xenobiotics from cells. Involved in porphyrin homeostasis, mediating the export of protoporphyrin IX (PPIX) from both mitochondria to cytosol and cytosol to extracellular space, it also functions in the cellular export of heme. Also mediates the efflux of sphingosine-1-P from cells. Acts as a urate exporter functioning in both renal and extrarenal urate excretion. In kidney, it also functions as a physiological exporter of the uremic toxin indoxyl sulfate. Also involved in the excretion of steroids like estrone 3-sulfate/E1S, 3beta-sulfooxy-androst-5-en-17-one/DHEAS, and other sulfate conjugates. Mediates the secretion of the riboflavin and biotin vitamins into milk. Extrudes pheophorbide a, a phototoxic porphyrin catabolite of chlorophyll, reducing its bioavailability. Plays an important role in the exclusion of xenobiotics from the brain. It confers to cells a resistance to multiple drugs and other xenobiotics including mitoxantrone, pheophorbide, camptothecin, methotrexate, azidothymidine, and the anthracyclines daunorubicin and doxorubicin, through the control of their efflux. In placenta, it limits the penetration of drugs from the maternal plasma into the fetus. May play a role in early stem cell self-renewal by blocking differentiation. In inflammatory macrophages, exports itaconate from the cytosol to the extracellular compartment and limits the activation of TFEB-dependent lysosome biogenesis involved in antibacterial innate immune response. This chain is Broad substrate specificity ATP-binding cassette transporter ABCG2 (ABCG2), found in Sus scrofa (Pig).